The sequence spans 91 residues: Small ribosomal subunit protein uS19 (91 aa).

Belongs to the universal ribosomal protein uS19 family.

Its function is as follows. Protein S19 forms a complex with S13 that binds strongly to the 16S ribosomal RNA. This Ectopseudomonas mendocina (strain ymp) (Pseudomonas mendocina) protein is Small ribosomal subunit protein uS19.